Reading from the N-terminus, the 561-residue chain is Phosphatidylinositol 4-kinase gamma 1 (561 aa).

Positions 121-416 (GAQPLLLPSG…SVFGKTSEDS (296 aa)) constitute a PI3K/PI4K catalytic domain. Positions 127–133 (LPSGMGG) are G-loop. Residues 128–134 (PSGMGGA), K149, and 233–236 (QRFV) each bind ATP. Residues 266–274 (LNLDRHAGN) form a catalytic loop region. The activation loop stretch occupies residues 296-322 (PIDHGLCLPECLDDPYFEWLNWPQALV). D298 lines the ATP pocket. The tract at residues 456-520 (PPLVPRGPRA…PISPNHDESK (65 aa)) is disordered. The span at 467-484 (TIPNDVTASMSSSQNQRI) shows a compositional bias: polar residues.

The protein belongs to the PI3/PI4-kinase family. Type II PI4K subfamily.

It catalyses the reaction a 1,2-diacyl-sn-glycero-3-phospho-(1D-myo-inositol) + ATP = a 1,2-diacyl-sn-glycero-3-phospho-(1D-myo-inositol 4-phosphate) + ADP + H(+). Functionally, the phosphorylation of phosphatidylinositol (PI) to PI4P is the first committed step in the generation of phosphatidylinositol 4,5-bisphosphate (PIP2), a precursor of the second messenger inositol 1,4,5-trisphosphate (InsP3). The chain is Phosphatidylinositol 4-kinase gamma 1 (PI4KG1) from Arabidopsis thaliana (Mouse-ear cress).